The sequence spans 277 residues: Undecaprenyl-diphosphatase (277 aa).

7 consecutive transmembrane segments (helical) span residues 5–25 (WTAA…FLPI), 44–64 (RAMA…VWEF), 86–106 (LNLL…ADTI), 110–130 (LFNA…MLWA), 184–204 (AATE…AVYS), 219–239 (VFAI…RALL), and 255–275 (IAFG…WASA).

This sequence belongs to the UppP family.

The protein resides in the cell inner membrane. The enzyme catalyses di-trans,octa-cis-undecaprenyl diphosphate + H2O = di-trans,octa-cis-undecaprenyl phosphate + phosphate + H(+). Functionally, catalyzes the dephosphorylation of undecaprenyl diphosphate (UPP). Confers resistance to bacitracin. This chain is Undecaprenyl-diphosphatase, found in Pseudomonas savastanoi pv. phaseolicola (strain 1448A / Race 6) (Pseudomonas syringae pv. phaseolicola (strain 1448A / Race 6)).